The primary structure comprises 357 residues: Norreticuline-7-O-methyltransferase (357 aa).

S-adenosyl-L-methionine is bound at residue Asp-225. The Proton acceptor role is filled by His-263.

It belongs to the class I-like SAM-binding methyltransferase superfamily. Cation-independent O-methyltransferase family. In terms of tissue distribution, expressed instems, leaves, roots and seedlings.

In terms of biological role, involved in the biosynthesis of benzylisoquinoline alkaloids. Catalyzes specifically the methylation of norreticuline at position seven to produce norlaudanine. No activity with norcoclaurine, reticuline, norlaudanosoline, norisoorientaline, scoulerine, salutaridinol, oripavine, salsolinol, codeine or morphine. Involved in papaverine biosynthesis. The sequence is that of Norreticuline-7-O-methyltransferase from Papaver somniferum (Opium poppy).